Consider the following 1158-residue polypeptide: Putative HERC2-like protein 3 (1158 aa).

The tract at residues 281 to 302 (PRKKRVPKKPESTDDEEKIGNE) is disordered. Over residues 293 to 302 (TDDEEKIGNE) the composition is skewed to acidic residues. The region spanning 587–660 (SGPELAAMMK…NYDLKLAELP (74 aa)) is the MIB/HERC2 domain. The disordered stretch occupies residues 662 to 684 (PAQPSAEDSDTEDDSEAEQTERN). The span at 668–679 (EDSDTEDDSEAE) shows a compositional bias: acidic residues.

The protein is Putative HERC2-like protein 3 (HERC2P3) of Homo sapiens (Human).